We begin with the raw amino-acid sequence, 78 residues long: NAD(P)H-quinone oxidoreductase subunit L (78 aa).

A run of 2 helical transmembrane segments spans residues 10 to 30 (LFVIGTYLFLGTLYLVFIPLG) and 48 to 68 (LLIYSLVFLFFPGLILFAPFL).

It belongs to the complex I NdhL subunit family. NDH-1 can be composed of about 15 different subunits; different subcomplexes with different compositions have been identified which probably have different functions.

Its subcellular location is the cellular thylakoid membrane. It catalyses the reaction a plastoquinone + NADH + (n+1) H(+)(in) = a plastoquinol + NAD(+) + n H(+)(out). The enzyme catalyses a plastoquinone + NADPH + (n+1) H(+)(in) = a plastoquinol + NADP(+) + n H(+)(out). In terms of biological role, NDH-1 shuttles electrons from an unknown electron donor, via FMN and iron-sulfur (Fe-S) centers, to quinones in the respiratory and/or the photosynthetic chain. The immediate electron acceptor for the enzyme in this species is believed to be plastoquinone. Couples the redox reaction to proton translocation, and thus conserves the redox energy in a proton gradient. Cyanobacterial NDH-1 also plays a role in inorganic carbon-concentration. This chain is NAD(P)H-quinone oxidoreductase subunit L, found in Prochlorococcus marinus (strain SARG / CCMP1375 / SS120).